A 337-amino-acid chain; its full sequence is Palmitoyltransferase ZDHHC15 (337 aa).

Residues 1 to 20 lie on the Cytoplasmic side of the membrane; the sequence is MRRGWKMALSGGLRCCRRVL. The helical transmembrane segment at 21 to 41 threads the bilayer; that stretch reads SWVPVLVIVLVVLWSYYAYVF. The Lumenal segment spans residues 42–56; it reads ELCLVTVLSPAEKVI. Residues 57-77 form a helical membrane-spanning segment; sequence YLILYHAIFVFFTWTYWKSIF. Residues 78–172 lie on the Cytoplasmic side of the membrane; that stretch reads TLPQQPNQKF…NNCIGFSNYK (95 aa). The DHHC domain occupies 129 to 179; sequence RFCDRCHLIKPDRCHHCSVCAMCVLKMDHHCPWVNNCIGFSNYKFFLQFLA. 7 residues coordinate Zn(2+): Cys131, Cys134, His144, Cys145, Cys148, Cys151, and His158. The active-site S-palmitoyl cysteine intermediate is the Cys159. Cys165 is a binding site for Zn(2+). Residues 173 to 193 form a helical membrane-spanning segment; the sequence is FFLQFLAYSVLYCLYIATTVF. Residues 194–210 are Lumenal-facing; the sequence is SYFIKYWRGELPSVRSK. A helical membrane pass occupies residues 211–234; the sequence is FHVLFLLFVACMFFVSLVILFGYH. Residues 235 to 337 are Cytoplasmic-facing; it reads CWLVSRNKTT…SSSLAVETET (103 aa). A disordered region spans residues 306–337; the sequence is PLLANEETWEDNEDDNQDYPEGSSSLAVETET. Residues 312-323 are compositionally biased toward acidic residues; the sequence is ETWEDNEDDNQD. The span at 327 to 337 shows a compositional bias: polar residues; it reads GSSSLAVETET.

This sequence belongs to the DHHC palmitoyltransferase family. In terms of processing, autopalmitoylated (in vitro). Expressed in placenta, liver, lung, kidney, heart and brain.

It localises to the golgi apparatus membrane. The protein resides in the postsynaptic density. It catalyses the reaction L-cysteinyl-[protein] + hexadecanoyl-CoA = S-hexadecanoyl-L-cysteinyl-[protein] + CoA. It carries out the reaction L-cysteinyl-[protein] + tetradecanoyl-CoA = S-tetradecanoyl-L-cysteinyl-[protein] + CoA. The catalysed reaction is L-cysteinyl-[protein] + octadecanoyl-CoA = S-octadecanoyl-L-cysteinyl-[protein] + CoA. Palmitoyltransferase that catalyzes the addition of palmitate onto various protein substrates. Has no stringent fatty acid selectivity and in addition to palmitate can also transfer onto target proteins myristate from tetradecanoyl-CoA and stearate from octadecanoyl-CoA. Palmitoylates IGF2R and SORT1, promoting their partitioning to an endosomal membrane subdomain where they can interact with the retromer cargo-selective complex. Thereby, regulates retrograde transport from endosomes to the Golgi apparatus of these lysosomal sorting receptors and plays a role in trafficking of lysosomal proteins. In the nervous system, catalyzes the palmitoylation of DLG4/PSD95 and regulates its synaptic clustering and function in synaptogenesis. Could be involved in the differentiation of dopaminergic neurons and the development of the diencephalon. Could also catalyze the palmitoylation of GAP43. Could also palmitoylate DNAJC5 and regulate its localization to the Golgi membrane. Could also palmitoylate FYN as shown in vitro. May palmitoylate CALHM3 subunit of gustatory voltage-gated ion channels and modulate channel gating and kinetics. This chain is Palmitoyltransferase ZDHHC15, found in Homo sapiens (Human).